The sequence spans 183 residues: Ribosome-recycling factor (183 aa).

It belongs to the RRF family.

Its subcellular location is the cytoplasm. Its function is as follows. Responsible for the release of ribosomes from messenger RNA at the termination of protein biosynthesis. May increase the efficiency of translation by recycling ribosomes from one round of translation to another. The polypeptide is Ribosome-recycling factor (Mycoplasma mobile (strain ATCC 43663 / 163K / NCTC 11711) (Mesomycoplasma mobile)).